The primary structure comprises 557 residues: NAC domain-containing protein 17 (557 aa).

The region spanning 16-166 is the NAC domain; the sequence is SAPGFRFHPT…YYALYKLFKK (151 aa). A DNA-binding region spans residues 115–172; sequence VGLKKTLVFYRGRAPSGERTDWVMHEYTMDEDELGRCKNPQEYYALYKLFKKSGAGPK. Residues 526–546 form a helical membrane-spanning segment; that stretch reads FLLLSIVGALCAIFWVLVATV.

In terms of tissue distribution, expressed in roots, rosette leaves, cauline leaves, shoot apex, stems and flowers.

It localises to the endoplasmic reticulum membrane. It is found in the nucleus. Its function is as follows. Transcriptional activator activated by proteolytic cleavage through regulated intramembrane proteolysis (RIP). Transcriptional activator that acts as a positive regulator of AOX1A during mitochondrial dysfunction. Binds directly to AOX1A promoter. Mediates mitochondrial retrograde signaling. In Arabidopsis thaliana (Mouse-ear cress), this protein is NAC domain-containing protein 17.